The following is a 332-amino-acid chain: Phosphate acyltransferase (332 aa).

Belongs to the PlsX family. As to quaternary structure, homodimer. Probably interacts with PlsY.

It is found in the cytoplasm. The enzyme catalyses a fatty acyl-[ACP] + phosphate = an acyl phosphate + holo-[ACP]. Its pathway is lipid metabolism; phospholipid metabolism. In terms of biological role, catalyzes the reversible formation of acyl-phosphate (acyl-PO(4)) from acyl-[acyl-carrier-protein] (acyl-ACP). This enzyme utilizes acyl-ACP as fatty acyl donor, but not acyl-CoA. This is Phosphate acyltransferase from Streptococcus sanguinis (strain SK36).